The following is a 610-amino-acid chain: Dapper homolog 3 (610 aa).

The residue at position 6 (serine 6) is a Phosphoserine. Disordered regions lie at residues 50 to 76 (PGMG…RRAA), 102 to 179 (LESG…SVGA), and 200 to 579 (TCSS…PAGP). Acidic residues predominate over residues 56-69 (EAEDEEDAEEDEDA). Residues 63–87 (AEEDEDAAAARRAAAALEEQLEALP) adopt a coiled-coil conformation. A compositionally biased stretch (low complexity) spans 120-138 (DPSSTGGPDSPPSTFCGDS). Phosphoserine is present on residues serine 165 and serine 237. Omega-N-methylarginine is present on arginine 255. Positions 317-331 (PPEPAPPAAASPPSS) are enriched in pro residues. A compositionally biased stretch (low complexity) spans 344–356 (PGAPAASRGLPGR). 2 positions are modified to phosphoserine: serine 409 and serine 456. The span at 475–485 (PRGPAPSPSAP) shows a compositional bias: pro residues. Low complexity predominate over residues 524–545 (ESESSASEGESPAFSSASSDSD). Gly residues predominate over residues 566–576 (GPGGAAGGGTP). Residues 607–610 (MTTV) carry the PDZ-binding motif.

Belongs to the dapper family. In terms of assembly, can form homodimers and heterodimers with DACT1 or DACT3. Interacts with CSNK1D, PKA catalytic subunit, PKC-type kinase, DVL1, DVL2, DVL3, VANGL1, VANGL2 and CTNND1. Expressed in brain and uterus.

May be involved in regulation of intracellular signaling pathways during development. Specifically thought to play a role in canonical and/or non-canonical Wnt signaling pathways through interaction with DSH (Dishevelled) family proteins. The chain is Dapper homolog 3 (Dact3) from Mus musculus (Mouse).